Consider the following 313-residue polypeptide: Probable WRKY transcription factor 41 (313 aa).

A DNA-binding region (WRKY) is located at residues 135-203 (GLEGPHDDIF…YRGTHTCSQG (69 aa)).

It belongs to the WRKY group III family.

Its subcellular location is the nucleus. Functionally, transcription factor. Interacts specifically with the W box (5'-(T)TGAC[CT]-3'), a frequently occurring elicitor-responsive cis-acting element. This chain is Probable WRKY transcription factor 41 (WRKY41), found in Arabidopsis thaliana (Mouse-ear cress).